Reading from the N-terminus, the 175-residue chain is Ribosome maturation factor RimM (175 aa).

In terms of domain architecture, PRC barrel spans 96–172 (PDTYYDHQLE…LIEIDPPDGL (77 aa)).

This sequence belongs to the RimM family. Binds ribosomal protein uS19.

The protein localises to the cytoplasm. Its function is as follows. An accessory protein needed during the final step in the assembly of 30S ribosomal subunit, possibly for assembly of the head region. Essential for efficient processing of 16S rRNA. May be needed both before and after RbfA during the maturation of 16S rRNA. It has affinity for free ribosomal 30S subunits but not for 70S ribosomes. The sequence is that of Ribosome maturation factor RimM from Mycolicibacterium paratuberculosis (strain ATCC BAA-968 / K-10) (Mycobacterium paratuberculosis).